A 717-amino-acid polypeptide reads, in one-letter code: Proline-rich receptor-like protein kinase PERK2 (717 aa).

Pro residues predominate over residues 1–197 (MSSAPPPGGT…GSLSPPPPAS (197 aa)). The segment at 1–221 (MSSAPPPGGT…GSSPPAQSSK (221 aa)) is disordered. Over 1-228 (MSSAPPPGGT…SSKELSKGAM (228 aa)) the chain is Extracellular. Over residues 198 to 220 (PSGGRSPSTPSTTPGSSPPAQSS) the composition is skewed to low complexity. Residues 229-249 (VGIAIGGGFVLLVALALIFFL) form a helical membrane-spanning segment. Residues 250–717 (CKKKRRRDNE…NIKRPGQGYG (468 aa)) lie on the Cytoplasmic side of the membrane. The tract at residues 258–323 (NEAPPAPIDG…YDSNYSDQSV (66 aa)) is disordered. The span at 289-303 (VPPPKSPSSAPPRPP) shows a compositional bias: pro residues. Over residues 307–322 (SSGSSGDYDSNYSDQS) the composition is skewed to low complexity. The 278-residue stretch at 354–631 (FSEANLLGQG…QVARVLEGNI (278 aa)) folds into the Protein kinase domain. ATP-binding positions include 360–368 (LGQGGFGYV) and Lys382. Catalysis depends on Asp478, which acts as the Proton acceptor. Composition is skewed to polar residues over residues 632–644 (SPSD…TPGH) and 692–705 (SWSS…QGKA). 2 disordered regions span residues 632 to 665 (SPSD…DNEG) and 690 to 717 (YPSW…QGYG).

This sequence belongs to the protein kinase superfamily. Ser/Thr protein kinase family. Mostly expressed in inflorescence bolt, flower buds and siliques, and, to a lower extent, in roots, seedlings and leaves.

The protein localises to the cell membrane. It catalyses the reaction L-seryl-[protein] + ATP = O-phospho-L-seryl-[protein] + ADP + H(+). The enzyme catalyses L-threonyl-[protein] + ATP = O-phospho-L-threonyl-[protein] + ADP + H(+). The sequence is that of Proline-rich receptor-like protein kinase PERK2 (PERK2) from Arabidopsis thaliana (Mouse-ear cress).